The sequence spans 180 residues: Anaerobic nitrite reductase GLB0 (180 aa).

The Globin domain occupies 23–172; that stretch reads TYSKENEQLV…LAEQVKAEMH (150 aa). Residues 56–60 carry the Homodimerization motif; that stretch reads EIAPG. The heme b site is built by Ser66, Lys80, His84, Lys114, Thr118, and His119. The Homodimerization signature appears at 126 to 138; sequence DDQFEIVKEAILY.

It belongs to the plant globin family. In terms of assembly, homodimer. The cofactor is heme b.

The protein localises to the cytoplasm. The protein resides in the nucleus. The catalysed reaction is Fe(III)-heme b-[protein] + nitric oxide + H2O = Fe(II)-heme b-[protein] + nitrite + 2 H(+). Phytoglobin that reduces nitrite to nitric oxide (NO) under anoxic conditions (e.g. during flooding or in waterlogged soil). May not function as an oxygen storage or transport protein. Has an unusually high affinity for O(2) through an hexacoordinate heme iron because of a very low dissociation constant. This Physcomitrium patens (Spreading-leaved earth moss) protein is Anaerobic nitrite reductase GLB0.